The sequence spans 101 residues: Small ribosomal subunit protein uS14 (101 aa).

This sequence belongs to the universal ribosomal protein uS14 family. In terms of assembly, part of the 30S ribosomal subunit. Contacts proteins S3 and S10.

Its function is as follows. Binds 16S rRNA, required for the assembly of 30S particles and may also be responsible for determining the conformation of the 16S rRNA at the A site. This Vesicomyosocius okutanii subsp. Calyptogena okutanii (strain HA) protein is Small ribosomal subunit protein uS14.